Consider the following 154-residue polypeptide: Small ribosomal subunit protein bS16 (154 aa).

Positions 111–121 (AAAGLAEAPTK) are enriched in low complexity. The disordered stretch occupies residues 111–154 (AAAGLAEAPTKPAKKAAKAEAAPKTDEAAPKTEEQAGAGSGEQG). The segment covering 127–144 (AKAEAAPKTDEAAPKTEE) has biased composition (basic and acidic residues).

It belongs to the bacterial ribosomal protein bS16 family.

The sequence is that of Small ribosomal subunit protein bS16 from Salinispora tropica (strain ATCC BAA-916 / DSM 44818 / JCM 13857 / NBRC 105044 / CNB-440).